Consider the following 628-residue polypeptide: NUAK family SNF1-like kinase 2 (628 aa).

At methionine 1 the chain carries N-acetylmethionine. One can recognise a Protein kinase domain in the interval tyrosine 53–valine 303. Residues leucine 59–valine 67 and lysine 81 each bind ATP. The active-site Proton acceptor is aspartate 175. A Phosphothreonine modification is found at threonine 208. Disordered stretches follow at residues lysine 355 to serine 492 and glycine 522 to glycine 570. Positions glutamate 428–proline 444 are enriched in pro residues. The residue at position 435 (serine 435) is a Phosphoserine. Over residues serine 457 to glycine 469 the composition is skewed to low complexity. 4 positions are modified to phosphoserine: serine 523, serine 544, serine 547, and serine 573.

Belongs to the protein kinase superfamily. CAMK Ser/Thr protein kinase family. SNF1 subfamily. It depends on Mg(2+) as a cofactor. Post-translationally, phosphorylated at Thr-208 by STK11/LKB1 in complex with STE20-related adapter-alpha (STRADA) pseudo kinase and CAB39. Autophosphorylation is also possible at Thr-208.

It catalyses the reaction L-seryl-[protein] + ATP = O-phospho-L-seryl-[protein] + ADP + H(+). The catalysed reaction is L-threonyl-[protein] + ATP = O-phospho-L-threonyl-[protein] + ADP + H(+). Its activity is regulated as follows. Activated by phosphorylation on Thr-208. In terms of biological role, stress-activated kinase involved in tolerance to glucose starvation. Induces cell-cell detachment by increasing F-actin conversion to G-actin. Expression is induced by CD95 or TNF-alpha, via NF-kappa-B. Protects cells from CD95-mediated apoptosis and is required for the increased motility and invasiveness of CD95-activated tumor cells. Phosphorylates LATS1 and LATS2. Plays a key role in neural tube closure during embryonic development through LATS2 phosphorylation and regulation of the nuclear localization of YAP1 a critical downstream regulatory target in the Hippo signaling pathway. This is NUAK family SNF1-like kinase 2 from Pongo abelii (Sumatran orangutan).